Here is a 277-residue protein sequence, read N- to C-terminus: Phosphatidylglycerol--prolipoprotein diacylglyceryl transferase (277 aa).

4 helical membrane passes run 22–42, 59–79, 107–127, and 133–153; these read ISIRYYGLLWAIGIFFAYIVV, LFFYCFFGILIGARLGHCLFY, GYEGLASHGGTLGLIISLWLY, and MNYMDVVDMIAVATPITACFI. A 1,2-diacyl-sn-glycero-3-phospho-(1'-sn-glycerol) is bound at residue arginine 154. Transmembrane regions (helical) follow at residues 186-206, 216-236, and 251-271; these read PAQLYEAIAYFILFLVMMFLY, GFFFGLCLTAIFTFRFFVEFL, and MGQWLSIPFVIIGIYFMFFYG.

It belongs to the Lgt family.

It localises to the cell inner membrane. It carries out the reaction L-cysteinyl-[prolipoprotein] + a 1,2-diacyl-sn-glycero-3-phospho-(1'-sn-glycerol) = an S-1,2-diacyl-sn-glyceryl-L-cysteinyl-[prolipoprotein] + sn-glycerol 1-phosphate + H(+). It participates in protein modification; lipoprotein biosynthesis (diacylglyceryl transfer). In terms of biological role, catalyzes the transfer of the diacylglyceryl group from phosphatidylglycerol to the sulfhydryl group of the N-terminal cysteine of a prolipoprotein, the first step in the formation of mature lipoproteins. The protein is Phosphatidylglycerol--prolipoprotein diacylglyceryl transferase of Bacteroides fragilis (strain ATCC 25285 / DSM 2151 / CCUG 4856 / JCM 11019 / LMG 10263 / NCTC 9343 / Onslow / VPI 2553 / EN-2).